Reading from the N-terminus, the 545-residue chain is E3 ubiquitin-protein ligase ipaH9.8 (545 aa).

The interval 1 to 242 (MLPINNNFSL…YHGPRIYFSM (242 aa)) is interaction with target proteins. LRR repeat units lie at residues 57-77 (NSDE…NLPA), 78-99 (QITL…PVTL), 100-117 (KKLY…VLPP), 118-139 (ALES…PDSL), 140-157 (LTMN…SLPQ), 158-179 (ALKN…SEGN), 182-203 (VVRE…ILNL), and 205-228 (NECS…QRLT). Positions 243 to 250 (SDGQQNTL) are linker. Positions 251–545 (HRPLADAVTA…PENGSQLHHS (295 aa)) are E3 ubiquitin-protein ligase catalytic domain. Positions 253-545 (PLADAVTAWF…PENGSQLHHS (293 aa)) constitute an NEL domain. The active-site Glycyl thioester intermediate is the C337.

Belongs to the LRR-containing bacterial E3 ligase family. Also interacts with human and mouse U2AF1 (U2AF35). Post-translationally, autoubiquitinated (in vitro). Ubiquitinated in the presence of host E1 ubiquitin-activating enzyme, E2 ubiquitin-conjugating enzyme and ubiquitin.

The protein resides in the secreted. Its subcellular location is the host cytoplasm. It localises to the host nucleus. The catalysed reaction is S-ubiquitinyl-[E2 ubiquitin-conjugating enzyme]-L-cysteine + [acceptor protein]-L-lysine = [E2 ubiquitin-conjugating enzyme]-L-cysteine + N(6)-ubiquitinyl-[acceptor protein]-L-lysine.. The protein operates within protein modification; protein ubiquitination. Its activity is regulated as follows. Exists in an autoinhibited state in the absence of substrate protein, due to interactions of the leucine-rich repeats with NEL domain. Is activated upon binding to a substrate protein. Effector E3 ubiquitin ligase that interferes with host's ubiquitination pathway and modulates the acute inflammatory responses, thus facilitating bacterial colonization within the host cell. Interacts with IKBKG (NEMO) and TNIP1 (ABIN-1), a ubiquitin-binding adapter protein, which results in TNIP1-dependent 'Lys-27'-linked polyubiquitination of IKBKG. Consequently, polyubiquitinated IKBKG undergoes proteasome-dependent degradation, which perturbs NF-kappa-B activation during bacterial infection. Mediates polyubiquitination of host U2AF1, leading to its proteasomal degradation. Catalyzes 'Lys-48'-linked polyubiquitination and subsequent degradation of a subset of host guanylate-binding proteins (GBP1, GBP2, GBP4 and GBP6), thereby suppressing host cell defense. In contrast, host GBP3 and GBP7 are not ubiquitinated by IpaH9.8. Uses UBE2D2 (UBCH5B) as an E2 ubiquitin-conjugating enzyme. The protein is E3 ubiquitin-protein ligase ipaH9.8 of Shigella flexneri.